The sequence spans 1050 residues: RecBCD enzyme subunit RecB (1050 aa).

The 443-residue stretch at Met1 to Thr443 folds into the UvrD-like helicase ATP-binding domain. The interval Met1 to Gln766 is DNA-binding and helicase activity, interacts with RecC. Ala21–Thr28 is an ATP binding site. Positions Ser458–Gly701 constitute a UvrD-like helicase C-terminal domain. Positions Pro814–His1050 are nuclease activity, interacts with RecD and RecA. Mg(2+) contacts are provided by His859, Asp945, and Asp958. Residue Asp958 is the For nuclease activity of the active site.

It belongs to the helicase family. UvrD subfamily. In terms of assembly, heterotrimer of RecB, RecC and RecD. All subunits contribute to DNA-binding. Interacts with RecA. It depends on Mg(2+) as a cofactor.

The enzyme catalyses Exonucleolytic cleavage (in the presence of ATP) in either 5'- to 3'- or 3'- to 5'-direction to yield 5'-phosphooligonucleotides.. It catalyses the reaction Couples ATP hydrolysis with the unwinding of duplex DNA by translocating in the 3'-5' direction.. It carries out the reaction ATP + H2O = ADP + phosphate + H(+). A helicase/nuclease that prepares dsDNA breaks (DSB) for recombinational DNA repair. Binds to DSBs and unwinds DNA via a highly rapid and processive ATP-dependent bidirectional helicase activity. Unwinds dsDNA until it encounters a Chi (crossover hotspot instigator) sequence from the 3' direction. Cuts ssDNA a few nucleotides 3' to the Chi site. The properties and activities of the enzyme are changed at Chi. The Chi-altered holoenzyme produces a long 3'-ssDNA overhang and facilitates RecA-binding to the ssDNA for homologous DNA recombination and repair. Holoenzyme degrades any linearized DNA that is unable to undergo homologous recombination. In the holoenzyme this subunit contributes ATPase, 3'-5' helicase, exonuclease activity and loads RecA onto ssDNA. The polypeptide is RecBCD enzyme subunit RecB (Chlamydia pneumoniae (Chlamydophila pneumoniae)).